Here is a 336-residue protein sequence, read N- to C-terminus: Aspartate--ammonia ligase (336 aa).

It belongs to the class-II aminoacyl-tRNA synthetase family. AsnA subfamily.

It localises to the cytoplasm. It carries out the reaction L-aspartate + NH4(+) + ATP = L-asparagine + AMP + diphosphate + H(+). It functions in the pathway amino-acid biosynthesis; L-asparagine biosynthesis; L-asparagine from L-aspartate (ammonia route): step 1/1. The sequence is that of Aspartate--ammonia ligase from Limosilactobacillus reuteri (strain DSM 20016) (Lactobacillus reuteri).